The sequence spans 100 residues: MAPFVRNLVEKTPALVNAAVTYLKPRLAAFWYYTTVELVPPTPAEIPRAIQSLKKIVSSAQTGSFKQLTVKEALLNGLVATEVSTWFYVREITGKRGIIG.

The protein belongs to the ATPase g subunit family. In terms of assembly, F-type ATPases have 2 components, CF(1) - the catalytic core - and CF(0) - the membrane proton channel. CF(0) seems to have nine subunits: a, b, c, d, e, f, g, F6 and 8 (or A6L).

Its subcellular location is the mitochondrion membrane. In terms of biological role, mitochondrial membrane ATP synthase (F(1)F(0) ATP synthase or Complex V) produces ATP from ADP in the presence of a proton gradient across the membrane which is generated by electron transport complexes of the respiratory chain. F-type ATPases consist of two structural domains, F(1) - containing the extramembraneous catalytic core, and F(0) - containing the membrane proton channel, linked together by a central stalk and a peripheral stalk. During catalysis, ATP synthesis in the catalytic domain of F(1) is coupled via a rotary mechanism of the central stalk subunits to proton translocation. Part of the complex F(0) domain. Minor subunit located with subunit a in the membrane. In Homo sapiens (Human), this protein is ATP synthase subunit g 2, mitochondrial.